The primary structure comprises 120 residues: Insoluble matrix shell protein 2 (120 aa).

A signal peptide spans 1 to 20 (MHQSSLGVLVLFSLIYLCIS).

As to expression, component of the acid-insoluble organic matrix of the calcified shell.

It localises to the secreted. The protein is Insoluble matrix shell protein 2 of Ruditapes philippinarum (Japanese carpet shell).